The chain runs to 303 residues: Methionyl-tRNA formyltransferase (303 aa).

108–111 (SDLP) contributes to the (6S)-5,6,7,8-tetrahydrofolate binding site.

This sequence belongs to the Fmt family.

The enzyme catalyses L-methionyl-tRNA(fMet) + (6R)-10-formyltetrahydrofolate = N-formyl-L-methionyl-tRNA(fMet) + (6S)-5,6,7,8-tetrahydrofolate + H(+). In terms of biological role, attaches a formyl group to the free amino group of methionyl-tRNA(fMet). The formyl group appears to play a dual role in the initiator identity of N-formylmethionyl-tRNA by promoting its recognition by IF2 and preventing the misappropriation of this tRNA by the elongation apparatus. The sequence is that of Methionyl-tRNA formyltransferase from Rickettsia typhi (strain ATCC VR-144 / Wilmington).